Consider the following 106-residue polypeptide: MAPTQLDIKVKALKRLTKEEGYYQQELKDQEAHVAKLKEDKSVDPYDLKKQEEVLDDTKRLLPTLYEKIREFKEDLEQFLKTYQGTEDVSDARSAITSAQELLDSK.

At Ser-94 the chain carries Phosphoserine.

It belongs to the TBCA family.

It is found in the cytoplasm. The protein resides in the cytoskeleton. In terms of biological role, tubulin-folding protein; involved in the early step of the tubulin folding pathway. The sequence is that of Tubulin-specific chaperone A (RBL2) from Saccharomyces cerevisiae (strain ATCC 204508 / S288c) (Baker's yeast).